We begin with the raw amino-acid sequence, 397 residues long: Elongation factor Tu (397 aa).

The 197-residue stretch at 10–206 folds into the tr-type G domain; sequence KPHVNIGTIG…AVDASIPEPE (197 aa). Residues 19–26 form a G1 region; the sequence is GHIDHGKT. Residue 19-26 coordinates GTP; it reads GHIDHGKT. Thr26 contributes to the Mg(2+) binding site. The interval 62 to 66 is G2; that stretch reads GITIS. The interval 83-86 is G3; the sequence is DCPG. GTP is bound by residues 83-87 and 138-141; these read DCPGH and NKAD. A G4 region spans residues 138 to 141; sequence NKAD. Residues 176–178 form a G5 region; that stretch reads SAL.

The protein belongs to the TRAFAC class translation factor GTPase superfamily. Classic translation factor GTPase family. EF-Tu/EF-1A subfamily. In terms of assembly, monomer.

It localises to the cytoplasm. The enzyme catalyses GTP + H2O = GDP + phosphate + H(+). Its function is as follows. GTP hydrolase that promotes the GTP-dependent binding of aminoacyl-tRNA to the A-site of ribosomes during protein biosynthesis. The polypeptide is Elongation factor Tu (Parafrankia sp. (strain EAN1pec)).